A 141-amino-acid polypeptide reads, in one-letter code: Aspartate 1-decarboxylase 1 (141 aa).

Ser-25 functions as the Schiff-base intermediate with substrate; via pyruvic acid in the catalytic mechanism. Ser-25 is subject to Pyruvic acid (Ser). Position 57 (Thr-57) interacts with substrate. Residue Tyr-58 is the Proton donor of the active site. Position 73-75 (73-75 (GPA)) interacts with substrate.

The protein belongs to the PanD family. Heterooctamer of four alpha and four beta subunits. Pyruvate serves as cofactor. Is synthesized initially as an inactive proenzyme, which is activated by self-cleavage at a specific serine bond to produce a beta-subunit with a hydroxyl group at its C-terminus and an alpha-subunit with a pyruvoyl group at its N-terminus.

The protein resides in the cytoplasm. It carries out the reaction L-aspartate + H(+) = beta-alanine + CO2. Its pathway is cofactor biosynthesis; (R)-pantothenate biosynthesis; beta-alanine from L-aspartate: step 1/1. Catalyzes the pyruvoyl-dependent decarboxylation of aspartate to produce beta-alanine. This is Aspartate 1-decarboxylase 1 from Paenarthrobacter aurescens (strain TC1).